A 139-amino-acid polypeptide reads, in one-letter code: MKKNTLLNAELSYIIASLGHTDEITICDAGLPIPDRSQRIDLALIQGIPTFIDTVKATLAEMQIEGVIVAQEFKTVSPQLHDELMTLVQIEEELRGKPITISYIPHEEFKSHSHQSKAIVRTGECTPYANVIFQSGVVF.

Residue H20 is the Proton donor of the active site. Residues D28, H106, and 128-130 (YAN) each bind substrate.

It belongs to the RbsD / FucU family. RbsD subfamily. As to quaternary structure, homodecamer.

It localises to the cytoplasm. The catalysed reaction is beta-D-ribopyranose = beta-D-ribofuranose. The protein operates within carbohydrate metabolism; D-ribose degradation; D-ribose 5-phosphate from beta-D-ribopyranose: step 1/2. Its function is as follows. Catalyzes the interconversion of beta-pyran and beta-furan forms of D-ribose. This Aliivibrio salmonicida (strain LFI1238) (Vibrio salmonicida (strain LFI1238)) protein is D-ribose pyranase.